We begin with the raw amino-acid sequence, 406 residues long: Phosphatidylinositol 5-phosphate 4-kinase type-2 alpha (406 aa).

A2 is modified (N-acetylalanine). Residue T3 is modified to Phosphothreonine. Residue S14 is modified to Phosphoserine. The 373-residue stretch at 33 to 405 (ASDPLLSVLM…RFLDFIGHIL (373 aa)) folds into the PIPK domain. Residues 59-65 (VMLMPDD) are required for interaction with PIP5K1A. K89 and K145 each carry N6-acetyllysine. The disordered stretch occupies residues 288–329 (QEEVECEENDGEEEGESDGTHPVGTPPDSPGNTLNSSPPLAP). The segment covering 289-304 (EEVECEENDGEEEGES) has biased composition (acidic residues).

As to quaternary structure, homodimer. Interacts with PIP4K2B; the interaction may regulate localization to the nucleus. Probably interacts with PIP5K1A; the interaction inhibits PIP5K1A kinase activity. Post-translationally, phosphorylated in tyrosines. Phosphorylation is induced by light and increases kinase activity. In terms of tissue distribution, expressed ubiquitously, with high levels in the brain. Present in most tissues, except notably skeletal muscle and small intestine.

The protein resides in the cell membrane. The protein localises to the nucleus. Its subcellular location is the lysosome. It localises to the cytoplasm. It is found in the photoreceptor inner segment. The protein resides in the cell projection. The protein localises to the cilium. Its subcellular location is the photoreceptor outer segment. It catalyses the reaction a 1,2-diacyl-sn-glycero-3-phospho-(1D-myo-inositol-5-phosphate) + ATP = a 1,2-diacyl-sn-glycero-3-phospho-(1D-myo-inositol-4,5-bisphosphate) + ADP + H(+). It carries out the reaction 1,2-dihexadecanoyl-sn-glycero-3-phospho-(1D-myo-inositol-5-phosphate) + ATP = 1,2-dihexadecanoyl-sn-glycero-3-phospho-(1D-myo-inositol-4,5-bisphosphate) + ADP + H(+). The catalysed reaction is 1,2-dihexadecanoyl-sn-glycero-3-phospho-(1D-myo-inositol-5-phosphate) + GTP = 1,2-dihexadecanoyl-sn-glycero-3-phospho-(1D-myo-inositol-4,5-bisphosphate) + GDP + H(+). In rod outer segments, activated by light. Inhibited by I-OMe tyrphostin AG-538 (I-OMe-AG-538), acting as an ATP-competitive inhibitor. Its function is as follows. Catalyzes the phosphorylation of phosphatidylinositol 5-phosphate (PtdIns5P) on the fourth hydroxyl of the myo-inositol ring, to form phosphatidylinositol 4,5-bisphosphate (PtdIns(4,5)P2). Has both ATP- and GTP-dependent kinase activities. May exert its function by regulating the levels of PtdIns5P, which functions in the cytosol by increasing AKT activity and in the nucleus signals through ING2. May regulate the pool of cytosolic PtdIns5P in response to the activation of tyrosine phosphorylation. Required for lysosome-peroxisome membrane contacts and intracellular cholesterol transport through modulating peroxisomal PtdIns(4,5)P2 level. In collaboration with PIP4K2B, has a role in mediating autophagy in times of nutrient stress. Required for autophagosome-lysosome fusion and the regulation of cellular lipid metabolism. May be involved in thrombopoiesis, and the terminal maturation of megakaryocytes and regulation of their size. Negatively regulates insulin signaling through a catalytic-independent mechanism. PIP4Ks interact with PIP5Ks and suppress PIP5K-mediated PtdIns(4,5)P2 synthesis and insulin-dependent conversion to PtdIns(3,4,5)P3. This is Phosphatidylinositol 5-phosphate 4-kinase type-2 alpha from Homo sapiens (Human).